Here is a 194-residue protein sequence, read N- to C-terminus: Peptidyl-tRNA hydrolase (194 aa).

Position 16 (Tyr16) interacts with tRNA. The active-site Proton acceptor is the His21. Tyr67, Asn69, and Asn115 together coordinate tRNA.

Belongs to the PTH family. In terms of assembly, monomer.

It is found in the cytoplasm. It catalyses the reaction an N-acyl-L-alpha-aminoacyl-tRNA + H2O = an N-acyl-L-amino acid + a tRNA + H(+). In terms of biological role, hydrolyzes ribosome-free peptidyl-tRNAs (with 1 or more amino acids incorporated), which drop off the ribosome during protein synthesis, or as a result of ribosome stalling. Catalyzes the release of premature peptidyl moieties from peptidyl-tRNA molecules trapped in stalled 50S ribosomal subunits, and thus maintains levels of free tRNAs and 50S ribosomes. The sequence is that of Peptidyl-tRNA hydrolase from Synechocystis sp. (strain ATCC 27184 / PCC 6803 / Kazusa).